We begin with the raw amino-acid sequence, 114 residues long: PDZK1-interacting protein 1 (114 aa).

The Extracellular segment spans residues 1–28 (MSAFGLLILGLLTAVPPASCRQGLGNLQ). The helical transmembrane segment at 29–51 (PWMQGLIAVAVFLVLVAIAFAVN) threads the bilayer. Over 52–114 (HFWCQEEPEP…EEGKVRSTPM (63 aa)) the chain is Cytoplasmic. Residue Ser-85 is modified to Phosphoserine. The segment at 95–114 (HENAYENVPEEEGKVRSTPM) is disordered. The segment covering 105-114 (EEGKVRSTPM) has biased composition (basic and acidic residues).

It belongs to the PDZK1-interacting protein 1/SMIM24 family. As to quaternary structure, forms a heterodimer (via N-terminal transmembrane helix) with SLC5A2/SGLT2 (via TM13); this interaction enhances SLC5A2 transporter activity. Interacts with PDZK1.

The protein resides in the apical cell membrane. Auxiliary protein of electrogenic Na(+)-coupled sugar symporter SLC5A2/SGLT2 and SLC5A1/SGLT1. Essential for the transporter activity of SLC5A2/SGLT2 but not SLC5A1/SGLT1. This Pongo abelii (Sumatran orangutan) protein is PDZK1-interacting protein 1.